A 148-amino-acid polypeptide reads, in one-letter code: SsrA-binding protein (148 aa).

The disordered stretch occupies residues 128–148 (ESIAKKDQERNLKREFKNNNR).

The protein belongs to the SmpB family.

It is found in the cytoplasm. Functionally, required for rescue of stalled ribosomes mediated by trans-translation. Binds to transfer-messenger RNA (tmRNA), required for stable association of tmRNA with ribosomes. tmRNA and SmpB together mimic tRNA shape, replacing the anticodon stem-loop with SmpB. tmRNA is encoded by the ssrA gene; the 2 termini fold to resemble tRNA(Ala) and it encodes a 'tag peptide', a short internal open reading frame. During trans-translation Ala-aminoacylated tmRNA acts like a tRNA, entering the A-site of stalled ribosomes, displacing the stalled mRNA. The ribosome then switches to translate the ORF on the tmRNA; the nascent peptide is terminated with the 'tag peptide' encoded by the tmRNA and targeted for degradation. The ribosome is freed to recommence translation, which seems to be the essential function of trans-translation. This chain is SsrA-binding protein, found in Fusobacterium nucleatum subsp. nucleatum (strain ATCC 25586 / DSM 15643 / BCRC 10681 / CIP 101130 / JCM 8532 / KCTC 2640 / LMG 13131 / VPI 4355).